The primary structure comprises 55 residues: UPF0391 membrane protein Meso_3110 (55 aa).

Transmembrane regions (helical) follow at residues tryptophan 4–alanine 24 and isoleucine 30–leucine 50.

This sequence belongs to the UPF0391 family.

The protein resides in the cell membrane. This Chelativorans sp. (strain BNC1) protein is UPF0391 membrane protein Meso_3110.